The primary structure comprises 151 residues: Transcriptional repressor NrdR (151 aa).

Residues 3–34 (CPFCNAQDTKVIDSRLVSEGSQVRRRRSCNEC) fold into a zinc finger. The ATP-cone domain maps to 49-139 (PRLIKSDGRR…VYRSFKDVKE (91 aa)).

This sequence belongs to the NrdR family. The cofactor is Zn(2+).

Negatively regulates transcription of bacterial ribonucleotide reductase nrd genes and operons by binding to NrdR-boxes. The protein is Transcriptional repressor NrdR of Psychromonas ingrahamii (strain DSM 17664 / CCUG 51855 / 37).